Here is an 816-residue protein sequence, read N- to C-terminus: Homeobox-leucine zipper protein ROC9 (816 aa).

Positions 26 to 104 (VFGRKNGPAA…RRKNYHRHTA (79 aa)) are disordered. The span at 92–101 (KKRRRKNYHR) shows a compositional bias: basic residues. The segment at residues 95–154 (RRKNYHRHTAEQIRIMEALFKESPHPDERQRQQVSKQLGLSARQVKFWFQNRRTQIKAVQ) is a DNA-binding region (homeobox). Residues 149–182 (QIKAVQERHENSLLKSELEKLQDEHRAMRELAKK) are a coiled coil. The tract at residues 265–296 (KSAADGIASPPCSASAGAMQTNSRSPPLHDHD) is disordered. The START domain occupies 302–541 (HDDDKPRILE…LQLQCERMVF (240 aa)).

It belongs to the HD-ZIP homeobox family. Class IV subfamily.

It localises to the nucleus. Functionally, probable transcription factor. In Oryza sativa subsp. japonica (Rice), this protein is Homeobox-leucine zipper protein ROC9 (ROC9).